A 180-amino-acid polypeptide reads, in one-letter code: Superoxide dismutase [Cu-Zn] (180 aa).

Residues 1 to 19 (MFMNLLTQVSNAIFPQVEA) form the signal peptide. 3 residues coordinate Cu cation: H68, H70, and H85. C79 and C171 are joined by a disulfide. Residues H85, H93, H102, and D105 each contribute to the Zn(2+) site. H142 lines the Cu cation pocket.

Belongs to the Cu-Zn superoxide dismutase family. In terms of assembly, homodimer. Requires Cu cation as cofactor. The cofactor is Zn(2+).

It is found in the cytoplasm. The enzyme catalyses 2 superoxide + 2 H(+) = H2O2 + O2. With respect to regulation, the insertion of copper which activates the protein requires glutathione. This is independent of copper chaperone for SOD1 (CCS), which activates orthologs. Its function is as follows. Protects cells against oxidative stress by converting superoxide radicals to hydrogen peroxide. Required for normal brood size. May be involved in regulating mpk-1 phosphorylation downstream of phosphatase ptp-2 during oocyte maturation. The polypeptide is Superoxide dismutase [Cu-Zn] (sod-1) (Caenorhabditis elegans).